A 388-amino-acid chain; its full sequence is Na(+)/H(+) antiporter NhaA (388 aa).

At methionine 1–aspartate 11 the chain is on the cytoplasmic side. A helical membrane pass occupies residues alanine 12–serine 31. Residues glycine 32 to asparagine 58 are Periplasmic-facing. The important for dimerization stretch occupies residues proline 45 to asparagine 58. The chain crosses the membrane as a helical span at residues methionine 59–lysine 80. Residues arginine 81 to phenylalanine 96 lie on the Cytoplasmic side of the membrane. The helical transmembrane segment at proline 97–asparagine 116 threads the bilayer. Topologically, residues tyrosine 117–threonine 122 are periplasmic. Residues arginine 123–alanine 130 form a helical membrane-spanning segment. At alanine 131–isoleucine 154 the chain is on the cytoplasmic side. The helical transmembrane segment at phenylalanine 155 to threonine 176 threads the bilayer. The Periplasmic segment spans residues asparagine 177 to serine 180. Residues methionine 181 to cysteine 200 form a helical membrane-spanning segment. The Cytoplasmic segment spans residues glycine 201–arginine 204. A helical transmembrane segment spans residues threonine 205 to serine 222. Position 223 (glycine 223) is a topological domain, periplasmic. The chain crosses the membrane as a helical span at residues valine 224–phenylalanine 236. Residues isoleucine 237 to histidine 253 are Cytoplasmic-facing. A helical membrane pass occupies residues valine 254–alanine 272. The Periplasmic portion of the chain corresponds to glycine 273–serine 286. Residues isoleucine 287–leucine 310 form a helical membrane-spanning segment. The Cytoplasmic portion of the chain corresponds to alanine 311–phenylalanine 339. Residues threonine 340 to phenylalanine 350 traverse the membrane as a helical segment. Topologically, residues glycine 351 to leucine 357 are periplasmic. A helical transmembrane segment spans residues isoleucine 358–leucine 380. Over arginine 381–valine 388 the chain is Cytoplasmic.

It belongs to the NhaA Na(+)/H(+) (TC 2.A.33) antiporter family. Monomer. Homodimer. Under routine stress conditions, the monomeric form is fully functional. However, the dimeric form is much more efficient in conferring growth resistance under extreme stress conditions.

The protein resides in the cell inner membrane. The catalysed reaction is Na(+)(in) + 2 H(+)(out) = Na(+)(out) + 2 H(+)(in). It carries out the reaction Li(+)(in) + 2 H(+)(out) = Li(+)(out) + 2 H(+)(in). Activity is regulated by pH. Active at alkaline pH. Activity is strongly down-regulated below pH 6.5 and a dramatic increase in activity is observed upon increase of the pH from 6.5 to 8.5. Na(+)/H(+) antiporter that extrudes sodium in exchange for external protons. Plays an important role in the regulation of intracellular pH, cellular Na(+) content and cell volume. Catalyzes the exchange of 2 H(+) per Na(+). This stoichiometry applies at both neutral and alkaline pH values. In addition, can also transport lithium and is involved in lithium detoxification. Binding of the Li(+) and H(+) ligands to NhaA is coupled and antagonistic. This Escherichia coli (strain K12) protein is Na(+)/H(+) antiporter NhaA.